An 831-amino-acid polypeptide reads, in one-letter code: uncharacterized protein (831 aa).

The active-site Tele-phosphohistidine intermediate is H787.

This sequence belongs to the PEP-utilizing enzyme family.

This is an uncharacterized protein from Bacillus subtilis (strain 168).